Here is a 101-residue protein sequence, read N- to C-terminus: Large ribosomal subunit protein uL23 (101 aa).

It belongs to the universal ribosomal protein uL23 family. In terms of assembly, part of the 50S ribosomal subunit. Contacts protein L29, and trigger factor when it is bound to the ribosome.

One of the early assembly proteins it binds 23S rRNA. One of the proteins that surrounds the polypeptide exit tunnel on the outside of the ribosome. Forms the main docking site for trigger factor binding to the ribosome. In Nocardia farcinica (strain IFM 10152), this protein is Large ribosomal subunit protein uL23.